A 327-amino-acid chain; its full sequence is Biotin synthase (327 aa).

The 228-residue stretch at 52-279 (NAIQRSTLLS…TSWVRLSAGR (228 aa)) folds into the Radical SAM core domain. 3 residues coordinate [4Fe-4S] cluster: Cys67, Cys71, and Cys74. Residues Cys111, Cys142, Cys202, and Arg274 each coordinate [2Fe-2S] cluster.

This sequence belongs to the radical SAM superfamily. Biotin synthase family. Homodimer. Requires [4Fe-4S] cluster as cofactor. It depends on [2Fe-2S] cluster as a cofactor.

The catalysed reaction is (4R,5S)-dethiobiotin + (sulfur carrier)-SH + 2 reduced [2Fe-2S]-[ferredoxin] + 2 S-adenosyl-L-methionine = (sulfur carrier)-H + biotin + 2 5'-deoxyadenosine + 2 L-methionine + 2 oxidized [2Fe-2S]-[ferredoxin]. It participates in cofactor biosynthesis; biotin biosynthesis; biotin from 7,8-diaminononanoate: step 2/2. Functionally, catalyzes the conversion of dethiobiotin (DTB) to biotin by the insertion of a sulfur atom into dethiobiotin via a radical-based mechanism. This chain is Biotin synthase, found in Dechloromonas aromatica (strain RCB).